The primary structure comprises 157 residues: MPRRRKIAKRIVPGDPIHNSIHVQMLINKVMMHGKKSVAENIVYRALDVAAQRLNREPVDLFEQVLRNSSPTIEVRPKRVGGSTYQVPVEVKSDRRIALAIRWLLTAARGRSGKPMHERLALELVDAFNNTGATVKRREEVHRMAEANRAFSHYARF.

Belongs to the universal ribosomal protein uS7 family. In terms of assembly, part of the 30S ribosomal subunit. Contacts proteins S9 and S11.

In terms of biological role, one of the primary rRNA binding proteins, it binds directly to 16S rRNA where it nucleates assembly of the head domain of the 30S subunit. Is located at the subunit interface close to the decoding center, probably blocks exit of the E-site tRNA. The chain is Small ribosomal subunit protein uS7 from Herpetosiphon aurantiacus (strain ATCC 23779 / DSM 785 / 114-95).